The sequence spans 142 residues: Aspartate 1-decarboxylase (142 aa).

S25 serves as the catalytic Schiff-base intermediate with substrate; via pyruvic acid. S25 bears the Pyruvic acid (Ser) mark. T57 contacts substrate. Y58 functions as the Proton donor in the catalytic mechanism. Position 73–75 (73–75) interacts with substrate; that stretch reads GAA.

Belongs to the PanD family. As to quaternary structure, heterooctamer of four alpha and four beta subunits. The cofactor is pyruvate. In terms of processing, is synthesized initially as an inactive proenzyme, which is activated by self-cleavage at a specific serine bond to produce a beta-subunit with a hydroxyl group at its C-terminus and an alpha-subunit with a pyruvoyl group at its N-terminus.

It is found in the cytoplasm. The enzyme catalyses L-aspartate + H(+) = beta-alanine + CO2. It participates in cofactor biosynthesis; (R)-pantothenate biosynthesis; beta-alanine from L-aspartate: step 1/1. Catalyzes the pyruvoyl-dependent decarboxylation of aspartate to produce beta-alanine. This Mycobacterium leprae (strain Br4923) protein is Aspartate 1-decarboxylase.